The following is a 483-amino-acid chain: PAT complex subunit CCDC47 (483 aa).

Residues 1-20 form the signal peptide; that stretch reads MKAFHTFCVVLLVFGSVSEA. At 21–135 the chain is on the cytoplasmic side; it reads KFDDFEDEED…PAHLQNSWES (115 aa). The disordered stretch occupies residues 46-118; it reads MEDSVTESPQ…PDTSSSKNKD (73 aa). A compositionally biased stretch (acidic residues) spans 60-104; that stretch reads TEDDEDETTVELEGQDENQEGDFEDADTQEGDTESEPYDDEEFEG. A compositionally biased stretch (basic and acidic residues) spans 105-118; that stretch reads YEDKPDTSSSKNKD. The helical transmembrane segment at 136–155 threads the bilayer; it reads YYLEILMVTGLLAYIMNYII. The Lumenal portion of the chain corresponds to 156 to 483; it reads GKNKNSRLAQ…KMKQIKVKAM (328 aa). Asn178 carries an N-linked (GlcNAc...) asparagine glycan. A disordered region spans residues 424 to 483; the sequence is QRQEAAQSRREEKKRAEKERIMNEEDPEKQRRLEEAALRREQKKLEKKQMKMKQIKVKAM. Residues 430-472 are compositionally biased toward basic and acidic residues; that stretch reads QSRREEKKRAEKERIMNEEDPEKQRRLEEAALRREQKKLEKKQ. The stretch at 450–483 forms a coiled coil; sequence PEKQRRLEEAALRREQKKLEKKQMKMKQIKVKAM. Positions 473–483 are enriched in basic residues; it reads MKMKQIKVKAM.

Belongs to the CCDC47 family. As to quaternary structure, component of the PAT complex, composed of WDR83OS/Asterix and CCDC47. The PAT complex is part of the multi-pass translocon (MPT) complex, composed of three subcomplexes, the GEL complex (composed of RAB5IF/OPTI and TMCO1), the BOS complex (composed of NCLN/Nicalin, NOMO and TMEM147) and the PAT complex (composed of WDR83OS/Asterix and CCDC47). The MPT complex associates with the SEC61 complex. Interacts with VCP, HSPA5, DERL1, DERL2 and SELENOS.

It localises to the endoplasmic reticulum membrane. The protein localises to the rough endoplasmic reticulum membrane. In terms of biological role, component of the multi-pass translocon (MPT) complex that mediates insertion of multi-pass membrane proteins into the lipid bilayer of membranes. The MPT complex takes over after the SEC61 complex: following membrane insertion of the first few transmembrane segments of proteins by the SEC61 complex, the MPT complex occludes the lateral gate of the SEC61 complex to promote insertion of subsequent transmembrane regions. Within the MPT complex, the PAT subcomplex sequesters any highly polar regions in the transmembrane domains away from the non-polar membrane environment until they can be buried in the interior of the fully assembled protein. Within the PAT subcomplex, CCDC47 occludes the lateral gate of the SEC61 complex. Involved in the regulation of calcium ion homeostasis in the ER. Required for proper protein degradation via the ERAD (ER-associated degradation) pathway. Has an essential role in the maintenance of ER organization during embryogenesis. This is PAT complex subunit CCDC47 from Homo sapiens (Human).